A 293-amino-acid chain; its full sequence is MALEMRLPVARKPLSESLGRESKKHLVVPGDTITTDTGFMRGHGTYMGEEKLIASVAGSVERVNKLICVKALKTRYNGEVGDIVVGRITEVQQKRWKVETNSRLDSVLLLSSMNLPGGELRRRSAEDELAMRGFLQEGDLISAEVQAVFSDGAVSLHTRSLKYGKLGQGVLVQVSPSLVKRQKTHFHDLPCGASVILGNNGFIWVYPTPEHKEDDAGGFIANLEPVSLTDREVISRLRNCIVSLATQRMMLYDTSILYCYEASLPHQIKDILKPEIMEEIVMETRQRLLEQEG.

One can recognise an S1 motif domain in the interval 79 to 159 (EVGDIVVGRI…SDGAVSLHTR (81 aa)). Serine 124 carries the phosphoserine modification.

The protein belongs to the RRP4 family. Component of the RNA exosome core complex (Exo-9), composed of EXOSC1, EXOSC2, EXOSC3, EXOSC4, EXOSC5, EXOSC6, EXOSC7, EXOSC8 and EXOSC9; within the complex interacts with EXOSC4 and EXOSC7. The catalytically inactive RNA exosome core complex (Exo-9) associates with the catalytic subunit EXOSC10/RRP6. Exo-9 may associate with DIS3 to form the nucleolar exosome complex, or DIS3L to form the cytoplasmic exosome complex. Exo-9 is formed by a hexameric base ring consisting of the heterodimers EXOSC4-EXOSC9, EXOSC5-EXOSC8 and EXOSC6-EXOSC7, and a cap ring consisting of EXOSC1, EXOSC2 and EXOSC3. The RNA exosome complex associates with cofactors C1D/RRP47, MPHOSPH6/MPP6 and MTREX/MTR4. Interacts with GTPBP1. Interacts with ZFP36L1 (via N-terminus).

The protein resides in the cytoplasm. The protein localises to the nucleus. Its subcellular location is the nucleolus. In terms of biological role, non-catalytic component of the RNA exosome complex which has 3'-&gt;5' exoribonuclease activity and participates in a multitude of cellular RNA processing and degradation events. In the nucleus, the RNA exosome complex is involved in proper maturation of stable RNA species such as rRNA, snRNA and snoRNA, in the elimination of RNA processing by-products and non-coding 'pervasive' transcripts, such as antisense RNA species and promoter-upstream transcripts (PROMPTs), and of mRNAs with processing defects, thereby limiting or excluding their export to the cytoplasm. The RNA exosome may be involved in Ig class switch recombination (CSR) and/or Ig variable region somatic hypermutation (SHM) by targeting AICDA deamination activity to transcribed dsDNA substrates. In the cytoplasm, the RNA exosome complex is involved in general mRNA turnover and specifically degrades inherently unstable mRNAs containing AU-rich elements (AREs) within their 3' untranslated regions, and in RNA surveillance pathways, preventing translation of aberrant mRNAs. It seems to be involved in degradation of histone mRNA. The catalytic inactive RNA exosome core complex of 9 subunits (Exo-9) is proposed to play a pivotal role in the binding and presentation of RNA for ribonucleolysis, and to serve as a scaffold for the association with catalytic subunits and accessory proteins or complexes. EXOSC2 as peripheral part of the Exo-9 complex stabilizes the hexameric ring of RNase PH-domain subunits through contacts with EXOSC4 and EXOSC7. The chain is Exosome complex component RRP4 (EXOSC2) from Bos taurus (Bovine).